We begin with the raw amino-acid sequence, 575 residues long: MIIIKRFLHIKTVPKSYGNQLSKFKYSKQIPTHEVLTKLGYITYPRAGLVNWSKMGLLIQNKISQIIRQRMDEIQFEEVSLSLISHKELWKLTNRWDQEEIFKLVGDEYLLVPTAEEEITNYVKKQFLESYKNFPLALYQINPKFRNEKRPRGGLLRGKEFLMKDAYSFDLNESEAMKTYEKVVGAYHKIFQDLGIPYVKAEADSGDIGGSLSHEWHYLNSSGEDTVFECNECHNVSNMEKALSYPKEIDETIEVSVIYFTTEDKSTLICAYYPSNRVLEPKFIQNEIPDIDLDSINDLSEFNHDISTRIVRIMDSRLSSRSKFPDFPISNFINRSLITTLTDIPIVLAQEGEICGHCEEGKLSASSAIEVGHTFYLGDKYSKPLDLEVDVPTSNNSIEKQRIMMGCYGIGISRIIAAIAEINRDEKGLKWPRSIAPWEVTVVEVSKQKQLKNVNDNNHHNNPQDNFQEIYNILNQANIDYRLDNRSDSMGKKLKQSDLLGIPLSIILGNQYPIIEIEVRGNKKNNNNNSWLQSYTENKDQFDWKVETDAQGNDTKHYIHKDGLVTVVNSLLNDM.

Belongs to the class-II aminoacyl-tRNA synthetase family.

It is found in the cytoplasm. It catalyses the reaction tRNA(Pro) + L-proline + ATP = L-prolyl-tRNA(Pro) + AMP + diphosphate. The polypeptide is Proline--tRNA ligase, cytoplasmic (PRS) (Candida albicans (Yeast)).